The primary structure comprises 447 residues: Rab GDP dissociation inhibitor alpha (447 aa).

The protein belongs to the Rab GDI family. In terms of assembly, interacts with RHOH. Interacts with the non-phosphorylated forms of RAB1A, RAB3A, RAB5A, RAB5B, RAB5C, RAB8A, RAB8B, RAB10, RAB12, RAB35, and RAB43.

The protein resides in the cytoplasm. The protein localises to the golgi apparatus. It is found in the trans-Golgi network. Its function is as follows. Regulates the GDP/GTP exchange reaction of most Rab proteins by inhibiting the dissociation of GDP from them, and the subsequent binding of GTP to them. Promotes the dissociation of GDP-bound Rab proteins from the membrane and inhibits their activation. Promotes the dissociation of RAB1A, RAB3A, RAB5A and RAB10 from membranes. The sequence is that of Rab GDP dissociation inhibitor alpha (GDI1) from Macaca fascicularis (Crab-eating macaque).